The primary structure comprises 1077 residues: Ubiquitin carboxyl-terminal hydrolase 28 (1077 aa).

Residues 60 to 80 (DERVKEPSQDTVATEPSEVEG) are disordered. A Phosphoserine modification is found at S67. The UIM domain maps to 97–116 (DNKDDLQAAIALSLLESPKI). A Glycyl lysine isopeptide (Lys-Gly) (interchain with G-Cter in SUMO2) cross-link involves residue K99. Residues 162–650 (VGLKNVGNTC…SAYCLMYIND (489 aa)) enclose the USP domain. Residue C171 is the Nucleophile of the active site. S375 is subject to Phosphoserine. A disordered region spans residues 477–535 (HCSVSDQTSKESTSTESSSQDVESTFSSPEDSLPKSKPLTSSRSSMEMPSQPAPRTVTD). The segment covering 481–501 (SDQTSKESTSTESSSQDVEST) has biased composition (low complexity). Over residues 514–524 (PLTSSRSSMEM) the composition is skewed to polar residues. Position 550 is a phosphoserine (S550). H600 (proton acceptor) is an active-site residue. A disordered region spans residues 697–728 (EEQSCKIPQMESSTNSSSQDYSTSQEPSVASS). Residues 707–724 (ESSTNSSSQDYSTSQEPS) are compositionally biased toward low complexity. The residue at position 714 (S714) is a Phosphoserine. A Glycyl lysine isopeptide (Lys-Gly) (interchain with G-Cter in SUMO2) cross-link involves residue K759. Position 1048 is a phosphothreonine (T1048).

It belongs to the peptidase C19 family. USP28 subfamily. Interacts with ZNF304. Interacts with PRKD1. Interacts with TP53BP1. Interacts with isoform 1 of FBXW7; following DNA damage, dissociates from FBXW7 leading to degradation of MYC. Post-translationally, degraded upon nickel ion level or hypoxia exposure. In terms of processing, phosphorylated upon DNA damage at Ser-67 and Ser-714, by ATM or ATR. Phosphorylated by PRKD1.

Its subcellular location is the nucleus. The protein localises to the nucleoplasm. It catalyses the reaction Thiol-dependent hydrolysis of ester, thioester, amide, peptide and isopeptide bonds formed by the C-terminal Gly of ubiquitin (a 76-residue protein attached to proteins as an intracellular targeting signal).. Deubiquitinase involved in DNA damage response checkpoint and MYC proto-oncogene stability. Involved in DNA damage induced apoptosis by specifically deubiquitinating proteins of the DNA damage pathway such as CLSPN. Also involved in G2 DNA damage checkpoint, by deubiquitinating CLSPN, and preventing its degradation by the anaphase promoting complex/cyclosome (APC/C). In contrast, it does not deubiquitinate PLK1. Specifically deubiquitinates MYC in the nucleoplasm, leading to prevent MYC degradation by the proteasome: acts by specifically interacting with isoform 1 of FBXW7 (FBW7alpha) in the nucleoplasm and counteracting ubiquitination of MYC by the SCF(FBW7) complex. In contrast, it does not interact with isoform 4 of FBXW7 (FBW7gamma) in the nucleolus, allowing MYC degradation and explaining the selective MYC degradation in the nucleolus. Deubiquitinates ZNF304, hence preventing ZNF304 degradation by the proteasome and leading to the activated KRAS-mediated promoter hypermethylation and transcriptional silencing of tumor suppressor genes (TSGs) in a subset of colorectal cancers (CRC) cells. The protein is Ubiquitin carboxyl-terminal hydrolase 28 (USP28) of Homo sapiens (Human).